The chain runs to 71 residues: Disintegrin halysin (71 aa).

A Disintegrin domain is found at 1 to 71 (EAGEECDCGS…ISAGCPRNPF (71 aa)). Disulfide bonds link Cys-6-Cys-21, Cys-8-Cys-16, Cys-15-Cys-38, Cys-29-Cys-35, Cys-34-Cys-59, and Cys-47-Cys-66. Residues 51-53 (RGD) carry the Cell attachment site motif.

It belongs to the venom metalloproteinase (M12B) family. P-II subfamily. P-IIa sub-subfamily. In terms of assembly, monomer. As to expression, expressed by the venom gland.

Its subcellular location is the secreted. In terms of biological role, inhibits fibrinogen interaction with platelets. Acts by binding to alpha-IIb/beta-3 (ITGA2B/ITGB3) on the platelet surface and inhibits aggregation induced by ADP, thrombin, platelet-activating factor and collagen. The protein is Disintegrin halysin of Gloydius blomhoffii (Mamushi).